Reading from the N-terminus, the 297-residue chain is 4-hydroxy-tetrahydrodipicolinate synthase (297 aa).

T46 lines the pyruvate pocket. The active-site Proton donor/acceptor is the Y136. The Schiff-base intermediate with substrate role is filled by K165. T206 is a binding site for pyruvate.

Belongs to the DapA family. In terms of assembly, homotetramer; dimer of dimers.

The protein resides in the cytoplasm. The catalysed reaction is L-aspartate 4-semialdehyde + pyruvate = (2S,4S)-4-hydroxy-2,3,4,5-tetrahydrodipicolinate + H2O + H(+). It participates in amino-acid biosynthesis; L-lysine biosynthesis via DAP pathway; (S)-tetrahydrodipicolinate from L-aspartate: step 3/4. Functionally, catalyzes the condensation of (S)-aspartate-beta-semialdehyde [(S)-ASA] and pyruvate to 4-hydroxy-tetrahydrodipicolinate (HTPA). In Sulfurimonas denitrificans (strain ATCC 33889 / DSM 1251) (Thiomicrospira denitrificans (strain ATCC 33889 / DSM 1251)), this protein is 4-hydroxy-tetrahydrodipicolinate synthase.